Consider the following 334-residue polypeptide: tRNA dimethylallyltransferase (334 aa).

22–29 is an ATP binding site; sequence GPTASGKT. 24–29 is a substrate binding site; the sequence is TASGKT.

The protein belongs to the IPP transferase family. As to quaternary structure, monomer. Mg(2+) is required as a cofactor.

It catalyses the reaction adenosine(37) in tRNA + dimethylallyl diphosphate = N(6)-dimethylallyladenosine(37) in tRNA + diphosphate. In terms of biological role, catalyzes the transfer of a dimethylallyl group onto the adenine at position 37 in tRNAs that read codons beginning with uridine, leading to the formation of N6-(dimethylallyl)adenosine (i(6)A). In Rhodopirellula baltica (strain DSM 10527 / NCIMB 13988 / SH1), this protein is tRNA dimethylallyltransferase.